The primary structure comprises 1095 residues: Solute carrier family 12 member 1 (1095 aa).

The Cytoplasmic segment spans residues 1–173; it reads MSVSIPSNSV…EEDMTGVVKF (173 aa). The RFXV motif motif lies at 16–19; that stretch reads RFQV. Positions 29–49 are disordered; that stretch reads AAAVGDSADPPHYEETSFGDE. Residues Ser-57 and Ser-87 each carry the phosphoserine modification. Phosphothreonine occurs at positions 91, 96, 101, and 114. Ser-116 carries the post-translational modification Phosphoserine. Ser-126 carries the phosphoserine; by AMPK modification. At Ser-144 the chain carries Phosphoserine. A helical transmembrane segment spans residues 174-194; it reads GWVKGVLVRCMLNIWGVMLFI. Residues 195 to 197 lie on the Extracellular side of the membrane; sequence RLS. Residues 198–218 traverse the membrane as a helical segment; that stretch reads WIVGEAGIGLGVLIILLSTMV. At 219-255 the chain is on the cytoplasmic side; the sequence is TSITGLSTSAIATNGFVRGGGAYYLISRSLGPEFGGS. The chain crosses the membrane as a helical span at residues 256–276; it reads IGLIFAFANAVAVAMYVVGFA. At 277-298 the chain is on the extracellular side; it reads ETVVDLLKESDSMMVDPTNDIR. Residues 299–319 traverse the membrane as a helical segment; the sequence is IIGSITVVILLGISVAGMEWE. At 320–323 the chain is on the cytoplasmic side; the sequence is AKAQ. The helical transmembrane segment at 324–344 threads the bilayer; that stretch reads VILLVILLIAIANFFIGTVIP. Over 345-375 the chain is Extracellular; the sequence is SNNEKKSRGFFNYQASIFAENFGPSFTKGEG. A helical transmembrane segment spans residues 376 to 396; sequence FFSVFAIFFPAATGILAGANI. Residues 397–413 are Cytoplasmic-facing; that stretch reads SGDLEDPQDAIPRGTML. Residues 414-434 traverse the membrane as a helical segment; it reads AIFITTVAYIGVAICVAACVV. The Extracellular portion of the chain corresponds to 435–546; the sequence is RDATGSMNDT…NNEPLRGYFL (112 aa). Residues Asn-442 and Asn-452 are each glycosylated (N-linked (GlcNAc...) asparagine). A run of 2 helical transmembrane segments spans residues 547-567 and 568-588; these read TFVI…APII and SNFF…ASYA. The Extracellular portion of the chain corresponds to 589–605; the sequence is KSPGWRPAYGIYNMWVS. The helical transmembrane segment at 606–626 threads the bilayer; sequence LFGAILCCAVMFVINWWAAVI. The Cytoplasmic portion of the chain corresponds to 627 to 1095; that stretch reads TYVIELFLYI…NHKNVLTFYS (469 aa).

The protein belongs to the SLC12A transporter family. When phosphorylated, interacts with PPP3CB. In terms of processing, phosphorylated at Ser-87, Thr-96 and Thr-101 by OXSR1/OSR1 and STK39/SPAK downstream of WNK kinases (WNK1, WNK2, WNK3 or WNK4), promoting its activity. Short-term cyclosporine administration increases SLC12A1 phosphorylation in kidney thick ascending limb, possibly through the inhibition of PPP3CB/calcineurin A beta phosphatase. As to expression, predominantly expressed in kidney (at protein level). In terms of tissue distribution, kidney-specific; most highly expressed in the outer stripe of outer medulla (at protein level). Kidney-specific; most highly expressed in the cortical thick ascending limb (at protein level). As to expression, kidney-specific; most highly expressed in the inner stripe of outer medulla (at protein level).

It is found in the apical cell membrane. It carries out the reaction K(+)(out) + 2 chloride(out) + Na(+)(out) = K(+)(in) + 2 chloride(in) + Na(+)(in). Its activity is regulated as follows. Activated following phosphorylation by OXSR1/OSR1 and STK39/SPAK downstream of WNK kinases (WNK1, WNK2, WNK3 or WNK4). With respect to regulation, inhibited by mercury dichloride and diuretic drug bumetaide. Inactive in isotonic conditions. Functionally, renal sodium, potassium and chloride ion cotransporter that mediates the transepithelial NaCl reabsorption in the thick ascending limb and plays an essential role in the urinary concentration and volume regulation. Electrically silent transporter system. High affinity, high capacity cotransporter for sodium, potassium and chloride ions, with a coupling ratio 1Na(+):1K(+):2Cl(-). Its function is as follows. High affinity, low capacity cotransporter for sodium, potassium and chloride ions, with a coupling ratio 1Na(+):1K(+):2Cl(-). In terms of biological role, low affinity, low capacity cotransporter for sodium, potassium and chloride ions, with a coupling ratio 1Na(+):1K(+):2Cl(-). This chain is Solute carrier family 12 member 1 (Slc12a1), found in Mus musculus (Mouse).